Reading from the N-terminus, the 855-residue chain is MNDQAPVAYAPLWRTAWRRLRQRPFQYILLVLGIALGVAMIVAIDVSSNSAQRAFDLSAAAITGKSTHRLVSGPAGVDQQLYVDLRRHGYDFSAPVIEGYVLARGLGNRAMQFMGTDPFAESAFRSPLWSNQNIAELGGFLTRPNGVVLSRQVAQKYGLAVGDRIALQVKGAPTTVTLVGLLTPADEVSNQKLSDLIIADISTAQELFHMPGRLSHIDLIIKDEATATRIQQRLPAGVRMETSDTQRDTVKQMTDAFTVNLTALSLIALLVGIFLIYNTVTFNVVQRRPFFAILRCLGVTREQLFWLIMTESLVAGLIGTGLGLLIGIWLGEGLIGLVTQTINDFYFVINVRNVSVSAESLLKGLIIGIFAAMLATLPPAIEAMRTVPASTLRRSSLESKITKLMPWLWVAWFGLGSFGVLMLWLPGNNLVVAFVGLFSVLIALALIAPPLTRFVMLRLAPGLGRLLGPIGRMAPRNIVRSLSRTSIAIAALMMAVSLMVGVSISVGSFRQTLANWLEVTLKSDVYVSPPTLTSGRPSGNLPVDAVRNISKWPGVRDAVMARYSSVFAPDWGREVELMAVSGDISDGKRPYRWIDGNKDTLWPRFLAGKGVMLSEPMVSRQHLQMPPRPITLMTDSGPQTFPVLAVFSDYTSDQGVILMDRASYRAHWQDDDVTTMFLFLASGANSGALIDQLQAAFAGREDIVIQSTHSVREASMFIFDRSFTITIALQLVATVVAFIGVLSALMSLELDRAHELGVFRAIGMTTRQLWKLMFIETGLMGGMAGLMALPTGCILAWILVRIINVRSFGWTLQMHFESAHFLRALLVAVVAALAAGMYPAWRLGRMTIRTAIREE.

A run of 10 helical transmembrane segments spans residues 24 to 44 (PFQYILLVLGIALGVAMIVAI), 256 to 276 (AFTVNLTALSLIALLVGIFLI), 318 to 338 (IGTGLGLLIGIWLGEGLIGLV), 361 to 381 (LLKGLIIGIFAAMLATLPPAI), 404 to 424 (LMPWLWVAWFGLGSFGVLMLW), 430 to 450 (LVVAFVGLFSVLIALALIAPP), 487 to 507 (IAIAALMMAVSLMVGVSISVG), 725 to 745 (ITIALQLVATVVAFIGVLSAL), 780 to 800 (MGGMAGLMALPTGCILAWILV), and 821 to 841 (FLRALLVAVVAALAAGMYPAW).

This sequence belongs to the ABC-4 integral membrane protein family. In terms of assembly, the complex is probably composed of two ATP-binding proteins (Rv0986) and two transmembrane proteins (Rv0987).

It is found in the cell membrane. Functionally, probably part of an ABC transporter complex involved in host cell binding either through secretion of an adherence factor or through maintaining the architecture and integrity of the mycobacterial cell envelope. Could be required for host endothelial-cell invasion and/or intracellular survival. This is an uncharacterized protein from Mycobacterium tuberculosis (strain ATCC 25618 / H37Rv).